A 170-amino-acid polypeptide reads, in one-letter code: Ribosome maturation factor RimP (170 aa).

This sequence belongs to the RimP family.

It is found in the cytoplasm. Functionally, required for maturation of 30S ribosomal subunits. This Acidothermus cellulolyticus (strain ATCC 43068 / DSM 8971 / 11B) protein is Ribosome maturation factor RimP.